Reading from the N-terminus, the 136-residue chain is Histone H3-7 (136 aa).

Residues 1 to 43 (MARTKQTARKSTGGKAPRKQLATKAARKSAPATGGVKKPHRYR) form a disordered region. Asymmetric dimethylarginine is present on Arg-3. Arg-3 carries the citrulline; alternate modification. Thr-4 bears the Phosphothreonine mark. Position 5 is an allysine; alternate (Lys-5). Lys-5 bears the N6,N6,N6-trimethyllysine; alternate mark. Position 5 is an N6,N6-dimethyllysine; alternate (Lys-5). Lys-5 carries the post-translational modification N6-(2-hydroxyisobutyryl)lysine; alternate. Lys-5 carries the N6-(beta-hydroxybutyryl)lysine; alternate modification. The residue at position 5 (Lys-5) is an N6-acetyllysine; alternate. Lys-5 bears the N6-methyllysine; alternate mark. The residue at position 6 (Gln-6) is a 5-glutamyl dopamine; alternate. A 5-glutamyl serotonin; alternate modification is found at Gln-6. The residue at position 7 (Thr-7) is a Phosphothreonine. Arg-9 carries the post-translational modification Citrulline; alternate. The residue at position 9 (Arg-9) is a Symmetric dimethylarginine. An N6,N6,N6-trimethyllysine; alternate modification is found at Lys-10. Lys-10 carries the post-translational modification N6,N6-dimethyllysine; alternate. Lys-10 carries the post-translational modification N6-(2-hydroxyisobutyryl)lysine; alternate. Residue Lys-10 is modified to N6-(beta-hydroxybutyryl)lysine; alternate. Lys-10 carries the post-translational modification N6-acetyllysine; alternate. The residue at position 10 (Lys-10) is an N6-methyllysine; alternate. Lys-10 is modified (N6-lactoyllysine; alternate). ADP-ribosylserine; alternate is present on Ser-11. Ser-11 is subject to Phosphoserine; alternate. Thr-12 carries the phosphothreonine modification. Lys-15 bears the N6-(2-hydroxyisobutyryl)lysine; alternate mark. Lys-15 is subject to N6-(beta-hydroxybutyryl)lysine; alternate. Lys-15 is subject to N6-acetyllysine; alternate. Lys-15 is modified (N6-lactoyllysine; alternate). An N6-glutaryllysine; alternate modification is found at Lys-15. Lys-15 is subject to N6-succinyllysine; alternate. Arg-18 bears the Asymmetric dimethylarginine mark. A Citrulline; alternate modification is found at Arg-18. Lys-19 and Lys-24 each carry N6-(2-hydroxyisobutyryl)lysine; alternate. 2 positions are modified to N6-(beta-hydroxybutyryl)lysine; alternate: Lys-19 and Lys-24. An N6-acetyllysine; alternate mark is found at Lys-19 and Lys-24. Residues Lys-19 and Lys-24 each carry the N6-methyllysine; alternate modification. N6-lactoyllysine; alternate occurs at positions 19 and 24. An N6-glutaryllysine; alternate mark is found at Lys-19 and Lys-24. An N6-butyryllysine; alternate mark is found at Lys-19 and Lys-24. Position 27 is a citrulline (Arg-27). Lys-28 is modified (N6,N6,N6-trimethyllysine; alternate). Lys-28 bears the N6,N6-dimethyllysine; alternate mark. The residue at position 28 (Lys-28) is an N6-(2-hydroxyisobutyryl)lysine; alternate. An N6-acetyllysine; alternate modification is found at Lys-28. Position 28 is an N6-methyllysine; alternate (Lys-28). At Lys-28 the chain carries N6-lactoyllysine; alternate. Residue Lys-28 is modified to N6-glutaryllysine; alternate. The residue at position 29 (Ser-29) is an ADP-ribosylserine; alternate. The residue at position 29 (Ser-29) is a Phosphoserine; alternate. Lys-37 bears the N6,N6,N6-trimethyllysine; alternate mark. An N6,N6-dimethyllysine; alternate modification is found at Lys-37. Lys-37 is modified (N6-(2-hydroxyisobutyryl)lysine; alternate). Residue Lys-37 is modified to N6-acetyllysine; alternate. Position 37 is an N6-methyllysine; alternate (Lys-37). Lys-38 carries the N6-methyllysine modification. Tyr-42 carries the phosphotyrosine modification. An N6,N6,N6-trimethyllysine; alternate modification is found at Lys-57. Lys-57 carries the N6-(2-hydroxyisobutyryl)lysine; alternate modification. At Lys-57 the chain carries N6-(beta-hydroxybutyryl)lysine; alternate. An N6-acetyllysine; alternate modification is found at Lys-57. Residue Lys-57 is modified to N6-lactoyllysine; alternate. An N6-glutaryllysine; alternate modification is found at Lys-57. Lys-57 is subject to N6-succinyllysine; alternate. At Lys-57 the chain carries N6-methyllysine. Ser-58 is modified (phosphoserine). N6-(2-hydroxyisobutyryl)lysine; alternate occurs at positions 65 and 80. An N6-methyllysine; alternate mark is found at Lys-65 and Lys-80. Residue Lys-80 is modified to N6,N6,N6-trimethyllysine; alternate. N6,N6-dimethyllysine; alternate is present on Lys-80. Lys-80 is subject to N6-acetyllysine; alternate. An N6-lactoyllysine; alternate modification is found at Lys-80. The residue at position 80 (Lys-80) is an N6-glutaryllysine; alternate. Residue Lys-80 is modified to N6-succinyllysine; alternate. At Thr-81 the chain carries Phosphothreonine. Ser-87 is modified (phosphoserine). A Phosphothreonine modification is found at Thr-108. N6-acetyllysine; alternate is present on residues Lys-116 and Lys-123. N6-glutaryllysine; alternate occurs at positions 116 and 123. At Lys-123 the chain carries N6-(2-hydroxyisobutyryl)lysine; alternate. N6-methyllysine; alternate is present on Lys-123. Lys-123 carries the N6-succinyllysine; alternate modification.

Belongs to the histone H3 family. In terms of assembly, the nucleosome is a histone octamer containing two molecules each of H2A, H2B, H3 and H4 assembled in one H3-H4 heterotetramer and two H2A-H2B heterodimers. The octamer wraps approximately 147 bp of DNA. During nucleosome assembly the chaperone ASF1A interacts with the histone H3-H4 heterodimer. Acetylation is generally linked to gene activation. Acetylation on Lys-10 (H3K9ac) impairs methylation at Arg-9 (H3R8me2s). Acetylation on Lys-19 (H3K18ac) and Lys-24 (H3K24ac) favors methylation at Arg-18 (H3R17me). Acetylation at Lys-123 (H3K122ac) by EP300/p300 plays a central role in chromatin structure: localizes at the surface of the histone octamer and stimulates transcription, possibly by promoting nucleosome instability. In terms of processing, citrullination at Arg-9 (H3R8ci) and/or Arg-18 (H3R17ci) by PADI4 impairs methylation and represses transcription. Post-translationally, asymmetric dimethylation at Arg-18 (H3R17me2a) by CARM1 is linked to gene activation. Symmetric dimethylation at Arg-9 (H3R8me2s) by PRMT5 is linked to gene repression. Asymmetric dimethylation at Arg-3 (H3R2me2a) by PRMT6 is linked to gene repression and is mutually exclusive with H3 Lys-5 methylation (H3K4me2 and H3K4me3). H3R2me2a is present at the 3' of genes regardless of their transcription state and is enriched on inactive promoters, while it is absent on active promoters. Methylation at Lys-5 (H3K4me), Lys-37 (H3K36me) and Lys-80 (H3K79me) are linked to gene activation. Methylation at Lys-5 (H3K4me) facilitates subsequent acetylation of H3 and H4. Methylation at Lys-80 (H3K79me) is associated with DNA double-strand break (DSB) responses and is a specific target for TP53BP1. Methylation at Lys-10 (H3K9me) and Lys-28 (H3K27me) are linked to gene repression. Methylation at Lys-10 (H3K9me) is a specific target for HP1 proteins (CBX1, CBX3 and CBX5) and prevents subsequent phosphorylation at Ser-11 (H3S10ph) and acetylation of H3 and H4. Methylation at Lys-5 (H3K4me) and Lys-80 (H3K79me) require preliminary monoubiquitination of H2B at 'Lys-120'. Methylation at Lys-10 (H3K9me) and Lys-28 (H3K27me) are enriched in inactive X chromosome chromatin. Monomethylation at Lys-57 (H3K56me1) by EHMT2/G9A in G1 phase promotes interaction with PCNA and is required for DNA replication. In terms of processing, phosphorylated at Thr-4 (H3T3ph) by HASPIN during prophase and dephosphorylated during anaphase. Phosphorylation at Ser-11 (H3S10ph) by AURKB is crucial for chromosome condensation and cell-cycle progression during mitosis and meiosis. In addition phosphorylation at Ser-11 (H3S10ph) by RPS6KA4 and RPS6KA5 is important during interphase because it enables the transcription of genes following external stimulation, like mitogens, stress, growth factors or UV irradiation and result in the activation of genes, such as c-fos and c-jun. Phosphorylation at Ser-11 (H3S10ph), which is linked to gene activation, prevents methylation at Lys-10 (H3K9me) but facilitates acetylation of H3 and H4. Phosphorylation at Ser-11 (H3S10ph) by AURKB mediates the dissociation of HP1 proteins (CBX1, CBX3 and CBX5) from heterochromatin. Phosphorylation at Ser-11 (H3S10ph) is also an essential regulatory mechanism for neoplastic cell transformation. Phosphorylated at Ser-29 (H3S28ph) by MAP3K20 isoform 1, RPS6KA5 or AURKB during mitosis or upon ultraviolet B irradiation. Phosphorylation at Thr-7 (H3T6ph) by PRKCB is a specific tag for epigenetic transcriptional activation that prevents demethylation of Lys-5 (H3K4me) by LSD1/KDM1A. At centromeres, specifically phosphorylated at Thr-12 (H3T11ph) from prophase to early anaphase, by DAPK3 and PKN1. Phosphorylation at Thr-12 (H3T11ph) by PKN1 or isoform M2 of PKM (PKM2) is a specific tag for epigenetic transcriptional activation that promotes demethylation of Lys-10 (H3K9me) by KDM4C/JMJD2C. Phosphorylation at Tyr-42 (H3Y41ph) by JAK2 promotes exclusion of CBX5 (HP1 alpha) from chromatin. Post-translationally, ubiquitinated. Lysine deamination at Lys-5 (H3K4all) to form allysine is mediated by LOXL2. Allysine formation by LOXL2 only takes place on H3K4me3 and results in gene repression. In terms of processing, butyrylation of histones marks active promoters and competes with histone acetylation. It is present during late spermatogenesis. Post-translationally, succinylation at Lys-80 (H3K79succ) by KAT2A takes place with a maximum frequency around the transcription start sites of genes. It gives a specific tag for epigenetic transcription activation. Desuccinylation at Lys-123 (H3K122succ) by SIRT7 in response to DNA damage promotes chromatin condensation and double-strand breaks (DSBs) repair. Serine ADP-ribosylation constitutes the primary form of ADP-ribosylation of proteins in response to DNA damage. Serine ADP-ribosylation at Ser-11 (H3S10ADPr) is mutually exclusive with phosphorylation at Ser-11 (H3S10ph) and impairs acetylation at Lys-10 (H3K9ac).

The protein resides in the nucleus. It is found in the chromosome. Functionally, core component of nucleosome. Nucleosomes wrap and compact DNA into chromatin, limiting DNA accessibility to the cellular machineries which require DNA as a template. Histones thereby play a central role in transcription regulation, DNA repair, DNA replication and chromosomal stability. DNA accessibility is regulated via a complex set of post-translational modifications of histones, also called histone code, and nucleosome remodeling. This Homo sapiens (Human) protein is Histone H3-7.